Reading from the N-terminus, the 120-residue chain is Superoxide dismutase [Cu-Zn] (120 aa).

The Cu cation site is built by His-11, His-13, and His-28. The segment at Gly-16 to Ile-52 is disordered. A disulfide bond links Cys-22 and Cys-112. Residues His-28, His-36, His-45, and Asp-48 each coordinate Zn(2+). A compositionally biased stretch (basic and acidic residues) spans Gly-33 to Gly-47. His-85 provides a ligand contact to Cu cation.

It belongs to the Cu-Zn superoxide dismutase family. In terms of assembly, homodimer. Cu cation serves as cofactor. Zn(2+) is required as a cofactor.

It is found in the cytoplasm. The catalysed reaction is 2 superoxide + 2 H(+) = H2O2 + O2. In terms of biological role, destroys radicals which are normally produced within the cells and which are toxic to biological systems. This is Superoxide dismutase [Cu-Zn] (sodC) from Aspergillus japonicus.